Here is a 239-residue protein sequence, read N- to C-terminus: Ribonuclease 3 (239 aa).

Residues isoleucine 12–glycine 137 enclose the RNase III domain. Glutamate 50 serves as a coordination point for Mg(2+). Residue aspartate 54 is part of the active site. Residues aspartate 123 and glutamate 126 each contribute to the Mg(2+) site. Glutamate 126 is a catalytic residue. Residues aspartate 162–valine 231 enclose the DRBM domain.

The protein belongs to the ribonuclease III family. Homodimer. Requires Mg(2+) as cofactor.

The protein resides in the cytoplasm. It catalyses the reaction Endonucleolytic cleavage to 5'-phosphomonoester.. Its function is as follows. Digests double-stranded RNA. Involved in the processing of primary rRNA transcript to yield the immediate precursors to the large and small rRNAs (23S and 16S). Processes some mRNAs, and tRNAs when they are encoded in the rRNA operon. Processes pre-crRNA and tracrRNA of type II CRISPR loci if present in the organism. The chain is Ribonuclease 3 from Agrobacterium fabrum (strain C58 / ATCC 33970) (Agrobacterium tumefaciens (strain C58)).